The primary structure comprises 294 residues: 3-methyl-2-oxobutanoate hydroxymethyltransferase (294 aa).

Positions 1–12 are enriched in polar residues; it reads MSASAESTNATP. The segment at 1 to 21 is disordered; sequence MSASAESTNATPYGTLPPTAA. 2 residues coordinate Mg(2+): aspartate 69 and aspartate 112. 3-methyl-2-oxobutanoate contacts are provided by residues 69-70, aspartate 112, and lysine 141; that span reads DS. Position 143 (glutamate 143) interacts with Mg(2+). Glutamate 210 serves as the catalytic Proton acceptor.

It belongs to the PanB family. As to quaternary structure, homodecamer; pentamer of dimers. Requires Mg(2+) as cofactor.

The protein localises to the cytoplasm. It catalyses the reaction 3-methyl-2-oxobutanoate + (6R)-5,10-methylene-5,6,7,8-tetrahydrofolate + H2O = 2-dehydropantoate + (6S)-5,6,7,8-tetrahydrofolate. The protein operates within cofactor biosynthesis; (R)-pantothenate biosynthesis; (R)-pantoate from 3-methyl-2-oxobutanoate: step 1/2. Functionally, catalyzes the reversible reaction in which hydroxymethyl group from 5,10-methylenetetrahydrofolate is transferred onto alpha-ketoisovalerate to form ketopantoate. This chain is 3-methyl-2-oxobutanoate hydroxymethyltransferase, found in Albidiferax ferrireducens (strain ATCC BAA-621 / DSM 15236 / T118) (Rhodoferax ferrireducens).